The following is a 132-amino-acid chain: L-ectoine synthase (132 aa).

The protein belongs to the ectoine synthase family.

It catalyses the reaction (2S)-4-acetamido-2-aminobutanoate = L-ectoine + H2O. It participates in amine and polyamine biosynthesis; ectoine biosynthesis; L-ectoine from L-aspartate 4-semialdehyde: step 3/3. Catalyzes the circularization of gamma-N-acetyl-alpha,gamma-diaminobutyric acid (ADABA) to ectoine (1,4,5,6-tetrahydro-2-methyl-4-pyrimidine carboxylic acid), which is an excellent osmoprotectant. The polypeptide is L-ectoine synthase (Rhodococcus erythropolis (strain PR4 / NBRC 100887)).